We begin with the raw amino-acid sequence, 156 residues long: Small ribosomal subunit protein uS7 (156 aa).

Belongs to the universal ribosomal protein uS7 family. As to quaternary structure, part of the 30S ribosomal subunit. Contacts proteins S9 and S11.

One of the primary rRNA binding proteins, it binds directly to 16S rRNA where it nucleates assembly of the head domain of the 30S subunit. Is located at the subunit interface close to the decoding center, probably blocks exit of the E-site tRNA. The protein is Small ribosomal subunit protein uS7 of Treponema denticola (strain ATCC 35405 / DSM 14222 / CIP 103919 / JCM 8153 / KCTC 15104).